A 201-amino-acid polypeptide reads, in one-letter code: MLKEIRPALVVLVVLTVICGLAYPLAMTGIAGVLFPEQAAGSLIVKDGAVIGSALIGQEFKDDKYFHGRPSATSAADPADPTKTVSSPYNAANSSGSNLGPTSKALNDRVKEDVDKLKAENPSAAVPVDLVTASGSGLDPEISPEAALFQVPRVARARGLSEDGVRKLVNAQTKGRFAGLLGEPRVNVLALNLALDATTRK.

A helical membrane pass occupies residues Val10 to Ile30. The tract at residues His67–Ala105 is disordered. Residues Pro70–Thr82 are compositionally biased toward low complexity. Over residues Lys83 to Ala105 the composition is skewed to polar residues.

The protein belongs to the KdpC family. In terms of assembly, the system is composed of three essential subunits: KdpA, KdpB and KdpC.

It is found in the cell inner membrane. In terms of biological role, part of the high-affinity ATP-driven potassium transport (or Kdp) system, which catalyzes the hydrolysis of ATP coupled with the electrogenic transport of potassium into the cytoplasm. This subunit acts as a catalytic chaperone that increases the ATP-binding affinity of the ATP-hydrolyzing subunit KdpB by the formation of a transient KdpB/KdpC/ATP ternary complex. The protein is Potassium-transporting ATPase KdpC subunit of Rhodopseudomonas palustris (strain BisB5).